The sequence spans 144 residues: Maximins 4/H3 type 2 (144 aa).

Positions 1 to 18 are cleaved as a signal peptide; sequence MNFKYIIAVSFFIASAYA. Positions 19–43 are excised as a propeptide; sequence RRNEKDVQSLSQRDVLEEESLREIR. Asn-70 carries the post-translational modification Asparagine amide. Positions 74 to 123 are excised as a propeptide; that stretch reads TAEDHEVMKRLEAVMRDLDSLDHPEEASERETRGFNQEEIANLFTKKEKR. Ile-143 is subject to Isoleucine amide.

It belongs to the bombinin family. As to expression, expressed by the skin glands.

The protein localises to the secreted. Functionally, maximin-4 shows antibacterial activity against both Gram-positive and Gram-negative bacteria. It also shows antimicrobial activity against the fungus C.albicans, but not against A.flavus nor P.uticale. It has little hemolytic activity. It does not possess a significant cytotoxicity against tumor cell lines. It does not possess a significant anti-HIV activity. In terms of biological role, maximin-H3 shows antibacterial activity against both Gram-positive and Gram-negative bacteria. It also shows antimicrobial activity against the fungus C.albicans. Shows strong hemolytic activity. The chain is Maximins 4/H3 type 2 from Bombina maxima (Giant fire-bellied toad).